A 149-amino-acid polypeptide reads, in one-letter code: Arginine repressor (149 aa).

This sequence belongs to the ArgR family.

It is found in the cytoplasm. It participates in amino-acid biosynthesis; L-arginine biosynthesis [regulation]. Functionally, regulates arginine biosynthesis genes. The polypeptide is Arginine repressor (Shouchella clausii (strain KSM-K16) (Alkalihalobacillus clausii)).